Consider the following 324-residue polypeptide: MGSNEQIHRDKLIIDTDPGIDDSMTILMAFRAPTVEIIGLTTIFGNTTTKNATQNALLLCERAGHPEVPVAEGSAEPLKGGEPRVADFVHGSDGLGNLFLPAPTSKKVDENAAEFMVNKVSQFPGEVSILALGPLTNVALAIKRDPSFASKVKKIVVLGGAFFAAGNVSPAAEANIYGDPEAADIVFTSGADVDVVGINITTQVCFTDEDLLELRNSKGKHAQFLCDMCQFYRDWHAESDGFHGIFLHDPVSFTALVHPEYFTFKKGVVRVETQGICTGHTLMDQGLKKWNSENPWSGYKPISVAWTVDVPNVLAFVKELLMAP.

The active site involves His248.

Belongs to the IUNH family.

The protein localises to the cytoplasm. It carries out the reaction uridine + H2O = D-ribose + uracil. Involved in pyrimidine breakdown. This is Probable uridine nucleosidase 1 (URH1) from Oryza sativa subsp. japonica (Rice).